Consider the following 389-residue polypeptide: MNLHEYQAKQLFEHYGLPVKNGAVCQSVEDVDLVLAQLSGDKWAAKCQVHAGGRGKAGGVKLVQDVEEARAFAEKWLGQRLVTFQTDKLGQPVNQIYFEETCDIDKEFYLSAVVDRASQKVMFIASPAGGMNIEEVAQNSLHLLHKVEIDPLFGGLPYQGRELAFKLGLSGTQNKQFTDIFMGLSRLFLEKDLSLVEVNPLVLTKQGYLVCLDAKISVDDNALFRHKDLLALQDLTQNDAREAEAEKFQLNYVALEGDIGCMVNGAGLAMGTMDIVKLYGGKPANFLDVGGGATKERVAEAFKIILTDPSVKVILVNIFGGIVRCDLIAEGVIAAVNEVGVRVPVVVRLEGTNAEMGRQILAQSDVNILTAQSLQQAAELAVNAAKGEH.

ATP contacts are provided by residues K46, 53-55 (GRG), E99, C102, and E107. Positions 199 and 213 each coordinate Mg(2+). Substrate is bound by residues N264 and 321–323 (GIV).

The protein belongs to the succinate/malate CoA ligase beta subunit family. As to quaternary structure, heterotetramer of two alpha and two beta subunits. It depends on Mg(2+) as a cofactor.

The enzyme catalyses succinate + ATP + CoA = succinyl-CoA + ADP + phosphate. It catalyses the reaction GTP + succinate + CoA = succinyl-CoA + GDP + phosphate. The protein operates within carbohydrate metabolism; tricarboxylic acid cycle; succinate from succinyl-CoA (ligase route): step 1/1. Functionally, succinyl-CoA synthetase functions in the citric acid cycle (TCA), coupling the hydrolysis of succinyl-CoA to the synthesis of either ATP or GTP and thus represents the only step of substrate-level phosphorylation in the TCA. The beta subunit provides nucleotide specificity of the enzyme and binds the substrate succinate, while the binding sites for coenzyme A and phosphate are found in the alpha subunit. In Haemophilus influenzae (strain 86-028NP), this protein is Succinate--CoA ligase [ADP-forming] subunit beta.